The sequence spans 347 residues: Glycerol-1-phosphate dehydrogenase [NAD(P)+] (347 aa).

Residues 90–94 (GRPVD) and 112–115 (TAIS) contribute to the NAD(+) site. Asp117 is a binding site for substrate. Residue Ser121 coordinates NAD(+). Residue Asp165 coordinates substrate. The Zn(2+) site is built by Asp165 and His245. His249 lines the substrate pocket. His262 serves as a coordination point for Zn(2+).

The protein belongs to the glycerol-1-phosphate dehydrogenase family. Homodimer. Requires Zn(2+) as cofactor.

The protein resides in the cytoplasm. The enzyme catalyses sn-glycerol 1-phosphate + NAD(+) = dihydroxyacetone phosphate + NADH + H(+). The catalysed reaction is sn-glycerol 1-phosphate + NADP(+) = dihydroxyacetone phosphate + NADPH + H(+). The protein operates within membrane lipid metabolism; glycerophospholipid metabolism. Its function is as follows. Catalyzes the NAD(P)H-dependent reduction of dihydroxyacetonephosphate (DHAP or glycerone phosphate) to glycerol 1-phosphate (G1P). The G1P thus generated is used as the glycerophosphate backbone of phospholipids in the cellular membranes of Archaea. This Thermofilum pendens (strain DSM 2475 / Hrk 5) protein is Glycerol-1-phosphate dehydrogenase [NAD(P)+].